The following is a 125-amino-acid chain: MSGRGKGGKVKAKAKSRSSRAGLQFPVGRIHRLLRKGHYAERIGAGAPVYLAAVMEYLGAEILELAGNAARDNKKTRIIPRHLQLAIRNDEELNKLLSGVTIAQGGVLPNIQAVLLPKKTESKKA.

Basic residues predominate over residues 1-18 (MSGRGKGGKVKAKAKSRS). A disordered region spans residues 1–21 (MSGRGKGGKVKAKAKSRSSRA). Ser-2 carries the post-translational modification N-acetylserine. Phosphoserine is present on Ser-2. A Glycyl lysine isopeptide (Lys-Gly) (interchain with G-Cter in ubiquitin) cross-link involves residue Lys-119.

The protein belongs to the histone H2A family. As to quaternary structure, the nucleosome is a histone octamer containing two molecules each of H2A, H2B, H3 and H4 assembled in one H3-H4 heterotetramer and two H2A-H2B heterodimers. The octamer wraps approximately 147 bp of DNA. Monoubiquitination of Lys-119 gives a specific tag for epigenetic transcriptional repression. In terms of processing, phosphorylation on Ser-2 is enhanced during mitosis. Phosphorylation on Ser-2 directly represses transcription.

Its subcellular location is the nucleus. The protein resides in the chromosome. Its function is as follows. Core component of nucleosome. Nucleosomes wrap and compact DNA into chromatin, limiting DNA accessibility to the cellular machineries which require DNA as a template. Histones thereby play a central role in transcription regulation, DNA repair, DNA replication and chromosomal stability. DNA accessibility is regulated via a complex set of post-translational modifications of histones, also called histone code, and nucleosome remodeling. This chain is Histone H2A, orphon, found in Chironomus thummi thummi (Midge).